The primary structure comprises 116 residues: uncharacterized protein (116 aa).

Residues 77 to 116 are disordered; it reads SATSHYPKADDPQRFARSVSRGPSRVRRPARNSASRPVRR.

This is an uncharacterized protein from Frog virus 3 (isolate Goorha) (FV-3).